Here is a 353-residue protein sequence, read N- to C-terminus: MYGPFLLKEFLNDVPLKPMHNTRMMAEAKFDFEEKKTQKSAATIENHSNRSCRDWLADMGMVFSKSQLCTKFDNRFRDAKAAQTIVCFQHSVLCRFAPYMRYIEKKLNEVLPATFYIHSGKGLEELNKWVIESKFEGVCTESDYEAFDASQDQYIVAFELALMRYLGLPNDLIEDYKYIKTHLGSKLGNFAIMRFSGEASTFLFNTMANMLFTFLRYKLKGDERICFAGDDMCANRALFIKDTHEGFLKKLKLKAKVDRTNRPSFCGWSLSSDGIYKKPQLVFERLCIAKETANLANCIDNYAIEVSYAYKLGERIKERMSEEELEAFYNCVRVIIKHKHLLKSEIRSVYEEV.

Residues 137–244 (GVCTESDYEA…NRALFIKDTH (108 aa)) enclose the RdRp catalytic domain.

It belongs to the potexviruses/carlaviruses RNA replication protein family.

It carries out the reaction RNA(n) + a ribonucleoside 5'-triphosphate = RNA(n+1) + diphosphate. It catalyses the reaction ATP + H2O = ADP + phosphate + H(+). RNA replication. The central part of this protein possibly functions as an ATP-binding helicase. This is RNA replication protein from Potato virus S (strain Peruvian).